The following is an 88-amino-acid chain: Small ribosomal subunit protein bS16c (88 aa).

Belongs to the bacterial ribosomal protein bS16 family.

The protein localises to the plastid. Its subcellular location is the chloroplast. The sequence is that of Small ribosomal subunit protein bS16c from Helianthus annuus (Common sunflower).